The chain runs to 142 residues: Large ribosomal subunit protein uL11 (142 aa).

Belongs to the universal ribosomal protein uL11 family. In terms of assembly, part of the ribosomal stalk of the 50S ribosomal subunit. Interacts with L10 and the large rRNA to form the base of the stalk. L10 forms an elongated spine to which L12 dimers bind in a sequential fashion forming a multimeric L10(L12)X complex. In terms of processing, one or more lysine residues are methylated.

Forms part of the ribosomal stalk which helps the ribosome interact with GTP-bound translation factors. This Methylocella silvestris (strain DSM 15510 / CIP 108128 / LMG 27833 / NCIMB 13906 / BL2) protein is Large ribosomal subunit protein uL11.